The chain runs to 183 residues: Adenine phosphoribosyltransferase (183 aa).

This sequence belongs to the purine/pyrimidine phosphoribosyltransferase family. In terms of assembly, homodimer.

It is found in the cytoplasm. The enzyme catalyses AMP + diphosphate = 5-phospho-alpha-D-ribose 1-diphosphate + adenine. Its pathway is purine metabolism; AMP biosynthesis via salvage pathway; AMP from adenine: step 1/1. Its function is as follows. Catalyzes a salvage reaction resulting in the formation of AMP, that is energically less costly than de novo synthesis. The chain is Adenine phosphoribosyltransferase from Salmonella heidelberg (strain SL476).